The sequence spans 32 residues: Cytochrome b6-f complex subunit 7 (32 aa).

The chain crosses the membrane as a helical span at residues 9–29 (AILSSVLVLVGLAVGFLLLKV).

Belongs to the PetM family. The 4 large subunits of the cytochrome b6-f complex are cytochrome b6, subunit IV (17 kDa polypeptide, PetD), cytochrome f and the Rieske protein, while the 4 small subunits are PetG, PetL, PetM and PetN. The complex functions as a dimer.

The protein resides in the plastid. It localises to the chloroplast thylakoid membrane. Functionally, component of the cytochrome b6-f complex, which mediates electron transfer between photosystem II (PSII) and photosystem I (PSI), cyclic electron flow around PSI, and state transitions. This is Cytochrome b6-f complex subunit 7 from Porphyra purpurea (Red seaweed).